We begin with the raw amino-acid sequence, 339 residues long: Methyltransferase ptaI (339 aa).

It belongs to the methyltransferase superfamily.

It participates in secondary metabolite biosynthesis. Methyltransferase; part of the gene cluster that mediates the biosynthesis of pestheic acid, a diphenyl ether which is a biosynthetic precursor of the unique chloropupukeananes. The biosynthesis initiates from condensation of acetate and malonate units catalyzed by the non-reducing PKS ptaA. As the ptaA protein is TE/CLC domain-deficient, hydrolysis and Claisen cyclization of the polyketide could be catalyzed by ptaB containing a beta-lactamase domain. The ptaB protein might hydrolyze the thioester bond between the ACP of ptaA and the intermediate to release atrochrysone carboxylic acid, which is spontaneously dehydrated to form endocrocin anthrone. Endocrocin anthrone is then converted to endocrocin, catalyzed by the anthrone oxygenase ptaC. Spontaneous decarboxylation of endocrocin occurs to generate emodin. An O-methyltransferase (ptaH or ptaI) could methylate emodin to form physcion. PtaJ could then catalyze the oxidative cleavage of physcion, and rotation of the intermediate could then afford desmethylisosulochrin. PtaF, a putative NADH-dependent oxidoreductase, might also participate in the oxidative cleavage step. Desmethylisosulochrin is then transformed by another O-methyltransferase (ptaH or ptaI) to form isosulochrin. Chlorination of isosulochrin by ptaM in the cyclohexadienone B ring then produces chloroisosulochrin. PtaE is responsible for the oxidative coupling reactions of both benzophenones isosulouchrin and chloroisosulochrin to RES-1214-1 and pestheic acid respectively, regardless of chlorination. In Pestalotiopsis fici (strain W106-1 / CGMCC3.15140), this protein is Methyltransferase ptaI.